The primary structure comprises 777 residues: Spastin (777 aa).

Low complexity-rich tracts occupy residues 1–24, 51–76, and 85–94; these read MVRT…KSNN, HAHS…SSSP, and DDLTPTGSSP. The interval 1 to 103 is disordered; that stretch reads MVRTKSSSSS…PRSCNGRGHS (103 aa). The Cytoplasmic segment spans residues 1–116; it reads MVRTKSSSSS…KQNLYVVSFP (116 aa). The tract at residues 1 to 215 is required for localization to punctate cytoplasmic foci; it reads MVRTKSSSSS…RALQPLEMAT (215 aa). The segment at residues 117–137 is an intramembrane region (helical); that stretch reads IIFLFNVLRSLIYQLFCIFRY. Residues 138–777 are Cytoplasmic-facing; the sequence is LYGASTKVLY…WSQDYGDITI (640 aa). Residues 213–777 form a sufficient for interaction with microtubules and microtubule severing region; that stretch reads MATNRPGGGY…WSQDYGDITI (565 aa). Positions 238-313 constitute an MIT domain; that stretch reads HRRAFEYISK…SMARDRLHFL (76 aa). The tract at residues 327–474 is disordered; that stretch reads LKEKQPAPKQ…SSGSGASTPM (148 aa). 3 stretches are compositionally biased toward polar residues: residues 372-389, 406-425, and 444-460; these read QNGT…TATG, PVTN…TTVG, and QFSS…RTPI. Residues 461-471 are compositionally biased toward low complexity; that stretch reads NNNASSGSGAS. Residues 462–474 are required for interaction with microtubules; it reads NNASSGSGASTPM. 542-549 is an ATP binding site; it reads GPPGNGKT.

This sequence belongs to the AAA ATPase family. Spastin subfamily. Homohexamer. The homohexamer is stabilized by ATP-binding. The homohexamer may adopt a ring conformation through which microtubules pass prior to being severed. Interacts with microtubules. Interacts with atl; may be involved in microtubule dynamics.

It is found in the membrane. The protein localises to the cytoplasm. The protein resides in the cytoskeleton. It localises to the microtubule organizing center. Its subcellular location is the centrosome. It is found in the chromosome. The protein localises to the lipid droplet. It catalyses the reaction n ATP + n H2O + a microtubule = n ADP + n phosphate + (n+1) alpha/beta tubulin heterodimers.. ATP-dependent microtubule severing protein. Stimulates microtubule minus-end depolymerization and poleward microtubule flux in the mitotic spindle. Regulates microtubule stability in the neuromuscular junction synapse. Involved in lipid metabolism by regulating the size and distribution of lipid droplets. Involved in axon regeneration by regulating microtubule severing. This chain is Spastin, found in Drosophila willistoni (Fruit fly).